The chain runs to 689 residues: Protein SDA1 homolog (689 aa).

Disordered stretches follow at residues 227-260 (DEKKDSDSESEDEGPTARDLMVRYSTGKKNTKNK), 485-512 (EQEKKEEPEEDDGWESASLSDDDEDGEW), and 623-689 (TDRK…RLMK). A coiled-coil region spans residues 258 to 319 (KNKKKLDKAM…RFEVKLMHMD (62 aa)). The span at 492–512 (PEEDDGWESASLSDDDEDGEW) shows a compositional bias: acidic residues. The span at 670-681 (RDKQIALRDSLL) shows a compositional bias: basic and acidic residues.

Belongs to the SDA1 family.

It localises to the nucleus. The protein localises to the nucleolus. Functionally, required for 60S pre-ribosomal subunits export to the cytoplasm. The protein is Protein SDA1 homolog (sdad1) of Xenopus laevis (African clawed frog).